We begin with the raw amino-acid sequence, 145 residues long: Protein BUD31 homolog 2 (145 aa).

The protein belongs to the BUD31 (G10) family.

Its subcellular location is the nucleus. The polypeptide is Protein BUD31 homolog 2 (Oryza sativa subsp. japonica (Rice)).